The chain runs to 204 residues: Peptide chain release factor homolog (204 aa).

Positions 2-98 are rRNA-recognition domain, N-terminus; that stretch reads ILLQLSSAQG…KNWFLGIGRF (97 aa). A linker 1 region spans residues 99–107; it reads TADEQEQSD. The interval 108–161 is GGQ domain; the sequence is AIRYETLRSSGPGGQHVNKTDSAVRATHLASGISVKVQSERSQHANKRLARLLI. A GGQ motif motif is present at residues 120–122; that stretch reads GGQ. Positions 162–179 are linker 2; that stretch reads AWKLEQQQQENSAALKSQ. The rRNA-recognition domain, C-terminus stretch occupies residues 180-204; it reads RRMFHHQIERGNPRRTFTGMAFIEG.

It belongs to the prokaryotic/mitochondrial release factor family. As to quaternary structure, found in the A site of damaged 70S ribosomes, but not in undamaged ribosomes. Contacts (damaged) 16S rRNA, 23S rRNA and ribosomal protein uS12, but not mRNA.

Its function is as follows. Peptide chain release-like factor that acts on 70S ribosomes with specific damage to their decoding center (cleavage of 16S rRNA between adenine-1493 and guanosine-1494, E.coli 16S rRNA numbering). Probably acts as a peptidyl-tRNA hydrolase, allowing release of the nascent chain and dissociation of the 30S and 50S subunits. Can release mRNA as short as 19 nucleotides (nt, mRNA-19, which has a single amino acid in the P-site and only a single nt in the A-site) from the ribosome. This specific cleavage is inflicted by CdiA (ECL_04451) or by colicin E3-type (ColE3) proteins. In vivo the PrfH-RtcB2 pair restores growth in the presence of ribotoxins that specifically create this damage. The protein is Peptide chain release factor homolog of Escherichia coli (strain ATCC 25922 / DSM 1103 / LMG 8223 / NCIMB 12210 / NCTC 12241 / WDCM 00013 / Seattle 1946).